Reading from the N-terminus, the 82-residue chain is Small ribosomal subunit protein bS16 (82 aa).

It belongs to the bacterial ribosomal protein bS16 family.

The chain is Small ribosomal subunit protein bS16 from Sodalis glossinidius (strain morsitans).